Reading from the N-terminus, the 453-residue chain is Tryptophan dimethylallyltransferase cnsF (453 aa).

L-tryptophan is bound by residues 84-85 (IL) and E93. The substrate site is built by R104, K190, and Y192. Residues Y194 and R248 each contribute to the L-tryptophan site. Substrate-binding residues include R261, K263, Y265, Q347, and Y349.

It belongs to the tryptophan dimethylallyltransferase family. In terms of assembly, homodimer.

It carries out the reaction L-tryptophan + dimethylallyl diphosphate = 4-(3-methylbut-2-enyl)-L-tryptophan + diphosphate. It functions in the pathway alkaloid biosynthesis. In terms of biological role, tryptophan dimethylallyltransferase; part of the gene cluster that mediates the biosynthesis of communesins, a prominent class of indole alkaloids with great potential as pharmaceuticals. Communesins are biosynthesized by the coupling of tryptamine and aurantioclavine, two building blocks derived from L-tryptophan. The L-tryptophan decarboxylase cnsB converts L-tryptophan to tryptamine, whereas the tryptophan dimethylallyltransferase cnsF converts L-tryptophan to 4-dimethylallyl tryptophan which is further transformed to aurantioclavine by the aurantioclavine synthase cnsA, probably aided by the catalase cnsD. The cytochrome P450 monooxygenase cnsC catalyzes the heterodimeric coupling between the two different indole moieties, tryptamine and aurantioclavine, to construct vicinal quaternary stereocenters and yield the heptacyclic communesin scaffold. The O-methyltransferase cnsE then methylates the communesin scaffold to produce communesin K, the simplest characterized communesin that contains the heptacyclic core. The dioxygenase cnsJ converts communesin K into communesin I. Acylation to introduce the hexadienyl group at position N16 of communesin I by the acyltransferase cnsK leads to the production of communesin B. The hexadienyl group is produced by the highly reducing polyketide synthase cnsI, before being hydrolytically removed from cnsI by the serine hydrolase cnsH, converted into hexadienyl-CoA by the CoA ligase cnsG, and then transferred to communesin I by cnsK. Surprisingly, cnsK may also be a promiscuous acyltransferase that can tolerate a range of acyl groups, including acetyl-, propionyl-, and butyryl-CoA, which lead to communesins A, G and H respectively. The roles of the alpha-ketoglutarate-dependent dioxygenases cnsM and cnsP have still to be determined. The protein is Tryptophan dimethylallyltransferase cnsF of Penicillium expansum (Blue mold rot fungus).